The primary structure comprises 385 residues: Chorismate synthase (385 aa).

NADP(+) contacts are provided by R40 and R46. Residues 128 to 130 (RAS), 248 to 249 (QA), G293, 308 to 312 (KAIPS), and R334 contribute to the FMN site.

The protein belongs to the chorismate synthase family. Homotetramer. FMNH2 is required as a cofactor.

It catalyses the reaction 5-O-(1-carboxyvinyl)-3-phosphoshikimate = chorismate + phosphate. Its pathway is metabolic intermediate biosynthesis; chorismate biosynthesis; chorismate from D-erythrose 4-phosphate and phosphoenolpyruvate: step 7/7. Catalyzes the anti-1,4-elimination of the C-3 phosphate and the C-6 proR hydrogen from 5-enolpyruvylshikimate-3-phosphate (EPSP) to yield chorismate, which is the branch point compound that serves as the starting substrate for the three terminal pathways of aromatic amino acid biosynthesis. This reaction introduces a second double bond into the aromatic ring system. The protein is Chorismate synthase of Endomicrobium trichonymphae.